A 345-amino-acid polypeptide reads, in one-letter code: Membrane progestin receptor alpha (345 aa).

Residues 1–74 (MAMAVAQKFN…FQRHNEAVNV (74 aa)) are Cytoplasmic-facing. Residues 75-95 (WTHLLAALALLLRLIGLAASV) form a helical membrane-spanning segment. Over 96 to 102 (DFREDPH) the chain is Extracellular. Residues 103–123 (ALPLFFIVLASFTYLSFSAVA) form a helical membrane-spanning segment. At 124–136 (HLLQAKSEFWHYS) the chain is on the cytoplasmic side. Residues 137–157 (FFFLDYVGVAVYQFGSALAHF) form a helical membrane-spanning segment. Topologically, residues 158 to 168 (YYAIEPSWHDK) are extracellular. Residues 169–189 (VQAIFLPTAAFLAWLSCAGSC) form a helical membrane-spanning segment. The Cytoplasmic portion of the chain corresponds to 190–243 (YNKYSQKPGLLGRIFQEAPSALAYVLDISPVLHRIIVSPLPAEEDPALLYHKCQ). Residues 244-264 (VVFFLLAAAFFSTVMPESWFP) form a helical membrane-spanning segment. Topologically, residues 265–268 (GSCH) are extracellular. A helical transmembrane segment spans residues 269–289 (IFGQGHQVFHVFLVLCTLAQL). Topologically, residues 290-315 (EAVTLDYQARRGIYEPLHARWPHNFS) are cytoplasmic. A helical membrane pass occupies residues 316–336 (GLFLLTVASSSLTALLLSQLV). Residues 337–345 (RRKLHQKTK) are Extracellular-facing.

It belongs to the ADIPOR family. In terms of tissue distribution, detected in most adult tissues. Higher expression found in white fat and liver than brown fat and skeletal muscle.

It localises to the cell membrane. Its function is as follows. Plasma membrane progesterone (P4) receptor coupled to G proteins. Seems to act through a G(i) mediated pathway. May be involved in oocyte maturation. Involved in neurosteroid inhibition of apoptosis. Also binds dehydroepiandrosterone (DHEA), pregnanolone, pregnenolone and allopregnanolone. The protein is Membrane progestin receptor alpha of Mus musculus (Mouse).